Here is a 311-residue protein sequence, read N- to C-terminus: Glutaminase (311 aa).

Substrate contacts are provided by Ser66, Asn116, Glu162, Asn169, Tyr193, Tyr245, and Val263.

Belongs to the glutaminase family. In terms of assembly, homotetramer.

It carries out the reaction L-glutamine + H2O = L-glutamate + NH4(+). This Rhodopseudomonas palustris (strain HaA2) protein is Glutaminase.